A 466-amino-acid polypeptide reads, in one-letter code: Putative multidrug resistance protein MdtD (466 aa).

14 consecutive transmembrane segments (helical) span residues 11–31, 48–68, 71–91, 105–125, 137–157, 164–184, 194–214, 218–238, 262–282, 286–306, 328–347, 351–370, 403–423, and 429–449; these read LWIV…VNTA, SVIV…GWLA, IGVK…SLLC, VIQG…VMKI, FVTL…GFLV, WIFL…WFLM, FDIS…LALD, SLGI…IALL, FSIG…LPFM, FLQL…VPMV, VLIV…ALVA, WIWM…AIRF, LGVS…MAAG, and MVFI…ALIF.

Belongs to the major facilitator superfamily. TCR/Tet family.

The protein localises to the cell inner membrane. This chain is Putative multidrug resistance protein MdtD, found in Pectobacterium carotovorum subsp. carotovorum (strain PC1).